A 103-amino-acid chain; its full sequence is MANKQAEKLITAIKKDYLKEIIKKIEELDIDKKDYIVEKLKEEKPKKKRNAPKIPLNKQCTKETASKGKCTVAACYNHICWAHMNKTQRNEYRLLKSVDIKTI.

In terms of biological role, DNA-binding protein that recognizes the inverted terminal repeats of the pGKl linear DNA plasmids. This Kluyveromyces lactis (strain ATCC 8585 / CBS 2359 / DSM 70799 / NBRC 1267 / NRRL Y-1140 / WM37) (Yeast) protein is DNA-binding protein TRF1 (TRF1).